We begin with the raw amino-acid sequence, 93 residues long: Co-chaperonin GroES (93 aa).

It belongs to the GroES chaperonin family. In terms of assembly, heptamer of 7 subunits arranged in a ring. Interacts with the chaperonin GroEL.

It localises to the cytoplasm. Its function is as follows. Together with the chaperonin GroEL, plays an essential role in assisting protein folding. The GroEL-GroES system forms a nano-cage that allows encapsulation of the non-native substrate proteins and provides a physical environment optimized to promote and accelerate protein folding. GroES binds to the apical surface of the GroEL ring, thereby capping the opening of the GroEL channel. This is Co-chaperonin GroES from Geobacillus kaustophilus (strain HTA426).